Reading from the N-terminus, the 326-residue chain is Glyoxylate/hydroxypyruvate reductase B (326 aa).

Residues Arg-237 and Glu-266 contribute to the active site. His-285 serves as the catalytic Proton donor.

It belongs to the D-isomer specific 2-hydroxyacid dehydrogenase family. GhrB subfamily. Homodimer.

The protein localises to the cytoplasm. The enzyme catalyses glycolate + NADP(+) = glyoxylate + NADPH + H(+). It carries out the reaction (R)-glycerate + NAD(+) = 3-hydroxypyruvate + NADH + H(+). The catalysed reaction is (R)-glycerate + NADP(+) = 3-hydroxypyruvate + NADPH + H(+). Its function is as follows. Catalyzes the NADPH-dependent reduction of glyoxylate and hydroxypyruvate into glycolate and glycerate, respectively. In Yersinia pseudotuberculosis serotype O:1b (strain IP 31758), this protein is Glyoxylate/hydroxypyruvate reductase B.